Consider the following 452-residue polypeptide: Tubulin beta-2 chain (452 aa).

Gln-11, Glu-72, Ser-141, Gly-145, Thr-146, Gly-147, Asn-207, and Asn-229 together coordinate GTP. Glu-72 provides a ligand contact to Mg(2+). The tract at residues 414 to 452 (AESNMNDPVAEYQQYQDATADDEEEYDDEAADDHHQYES) is disordered. Residues 432-444 (TADDEEEYDDEAA) are compositionally biased toward acidic residues.

Belongs to the tubulin family. In terms of assembly, dimer of alpha and beta chains. A typical microtubule is a hollow water-filled tube with an outer diameter of 25 nm and an inner diameter of 15 nM. Alpha-beta heterodimers associate head-to-tail to form protofilaments running lengthwise along the microtubule wall with the beta-tubulin subunit facing the microtubule plus end conferring a structural polarity. Microtubules usually have 13 protofilaments but different protofilament numbers can be found in some organisms and specialized cells. Mg(2+) is required as a cofactor.

Its subcellular location is the cytoplasm. The protein resides in the cytoskeleton. In terms of biological role, tubulin is the major constituent of microtubules, a cylinder consisting of laterally associated linear protofilaments composed of alpha- and beta-tubulin heterodimers. Microtubules grow by the addition of GTP-tubulin dimers to the microtubule end, where a stabilizing cap forms. Below the cap, tubulin dimers are in GDP-bound state, owing to GTPase activity of alpha-tubulin. In Solanum tuberosum (Potato), this protein is Tubulin beta-2 chain (TUBB2).